Consider the following 118-residue polypeptide: Large ribosomal subunit protein bL17 (118 aa).

This sequence belongs to the bacterial ribosomal protein bL17 family. Part of the 50S ribosomal subunit. Contacts protein L32.

This chain is Large ribosomal subunit protein bL17, found in Gemmatimonas aurantiaca (strain DSM 14586 / JCM 11422 / NBRC 100505 / T-27).